A 100-amino-acid chain; its full sequence is MAKKSMIERDRKRARLITKYAAKRKNLLVEIKTATSLEDKFNLHRKLQQLPRNSAPVRSHNRCTITGRPRGYFRDFGLSRHVLREYALQGFLPGVVKASW.

It belongs to the universal ribosomal protein uS14 family. As to quaternary structure, part of the 30S ribosomal subunit.

The protein resides in the plastid. It is found in the chloroplast. In terms of biological role, binds 16S rRNA, required for the assembly of 30S particles. The chain is Small ribosomal subunit protein uS14c from Chlorella vulgaris (Green alga).